The chain runs to 311 residues: Porphobilinogen deaminase (311 aa).

Cys-241 is subject to S-(dipyrrolylmethanemethyl)cysteine.

Belongs to the HMBS family. In terms of assembly, monomer. Requires dipyrromethane as cofactor.

The catalysed reaction is 4 porphobilinogen + H2O = hydroxymethylbilane + 4 NH4(+). It participates in porphyrin-containing compound metabolism; protoporphyrin-IX biosynthesis; coproporphyrinogen-III from 5-aminolevulinate: step 2/4. Tetrapolymerization of the monopyrrole PBG into the hydroxymethylbilane pre-uroporphyrinogen in several discrete steps. The sequence is that of Porphobilinogen deaminase from Carboxydothermus hydrogenoformans (strain ATCC BAA-161 / DSM 6008 / Z-2901).